The sequence spans 312 residues: MIEFKKPNITVVDQEDSYGKFVVEPLERGFGTTLGNSLRRVLLTSVPGTGLVKVKIDGILHEFTTVPGVKEDVTKIILNLKKLELRAYTEEVKTIELDVEGPATVTAEDLKADADVEVLNPDQYICTIAQGGHLHMWIDVCNGRGYVPASENKTAEMSIGDIPVDSLFSPIEKVNYQVESTRVGKREDFDKLTLEIWTNGSIAPNDALNFAARVLVEHFKAFESADAAAEIGEVMVEQENDQKEKKLEMTIEDLDLSVRSYNCLKRAGINTLQDLTVKSEAEMMRVRNLGRKSLEEVKNKLADLGLSLRQED.

The segment at 1 to 226 is alpha N-terminal domain (alpha-NTD); that stretch reads MIEFKKPNIT…EHFKAFESAD (226 aa). The alpha C-terminal domain (alpha-CTD) stretch occupies residues 243–312; that stretch reads KEKKLEMTIE…DLGLSLRQED (70 aa).

This sequence belongs to the RNA polymerase alpha chain family. In terms of assembly, homodimer. The RNAP catalytic core consists of 2 alpha, 1 beta, 1 beta' and 1 omega subunit. When a sigma factor is associated with the core the holoenzyme is formed, which can initiate transcription.

It catalyses the reaction RNA(n) + a ribonucleoside 5'-triphosphate = RNA(n+1) + diphosphate. Its function is as follows. DNA-dependent RNA polymerase catalyzes the transcription of DNA into RNA using the four ribonucleoside triphosphates as substrates. The sequence is that of DNA-directed RNA polymerase subunit alpha from Lactobacillus delbrueckii subsp. bulgaricus (strain ATCC 11842 / DSM 20081 / BCRC 10696 / JCM 1002 / NBRC 13953 / NCIMB 11778 / NCTC 12712 / WDCM 00102 / Lb 14).